The following is a 515-amino-acid chain: SWI/SNF-related matrix-associated actin-dependent regulator of chromatin subfamily D member 1 (515 aa).

Residues 1–128 are disordered; sequence MAARAGFQSV…RNHNAKKKKM (128 aa). The segment covering 14–23 has biased composition (gly residues); sequence GGAGASGGAG. An interaction with ESR1, NR1H4, NR3C1, PGR and SMARCA4 region spans residues 43-167; sequence APGQGLYRSP…DQTIMRKRLD (125 aa). Residues Arg68 and Arg88 each carry the asymmetric dimethylarginine modification. A Glycyl lysine isopeptide (Lys-Gly) (interchain with G-Cter in SUMO2) cross-link involves residue Lys101. A compositionally biased stretch (low complexity) spans 103–117; that stretch reads PAPQQIKQVQQQAVQ. The interaction with SMARCC1 and SMARCC2 stretch occupies residues 168–474; sequence IQEALKRPIK…VMTDVVGNSE (307 aa). Residues 180–515 are necessary for GR/NR3C1-mediated remodeling and transcription from chromatin; required for GR/NR3C1 interaction with the BRG1/SMARCA4 complex in vivo; sequence RKLRIFISNT…LEQALGIRNT (336 aa). Thr203 carries the phosphothreonine modification. An N6-acetyllysine modification is found at Lys223. An SWIB/MDM2 domain is found at 290-367; the sequence is YQPPQFKLDP…PQRLHALLMP (78 aa). A coiled-coil region spans residues 412 to 440; that stretch reads ASQQEIATLDNKIHETIETINQLKTQREF.

The protein belongs to the SMARCD family. Component of the multiprotein chromatin-remodeling complexes SWI/SNF: SWI/SNF-A (BAF), SWI/SNF-B (PBAF) and related complexes. The canonical complex contains a catalytic subunit (either SMARCA4/BRG1/BAF190A or SMARCA2/BRM/BAF190B), and at least SMARCE1, ACTL6A/BAF53, SMARCC1/BAF155, SMARCC2/BAF170, and SMARCB1/SNF5/BAF47. Other subunits specific to each of the complexes may also be present permitting several possible combinations developmentally and tissue specific. Component of the BAF complex, which includes at least actin (ACTB), ARID1A/BAF250A, ARID1B/BAF250B, SMARCA2/BRM, SMARCA4/BRG1/BAF190A, ACTL6A/BAF53, ACTL6B/BAF53B, SMARCE1/BAF57, SMARCC1/BAF155, SMARCC2/BAF170, SMARCB1/SNF5/INI1, and one or more SMARCD1/BAF60A, SMARCD2/BAF60B, or SMARCD3/BAF60C. In muscle cells, the BAF complex also contains DPF3. Component of neural progenitors-specific chromatin remodeling complex (npBAF complex) composed of at least, ARID1A/BAF250A or ARID1B/BAF250B, SMARCD1/BAF60A, SMARCD3/BAF60C, SMARCA2/BRM/BAF190B, SMARCA4/BRG1/BAF190A, SMARCB1/BAF47, SMARCC1/BAF155, SMARCE1/BAF57, SMARCC2/BAF170, PHF10/BAF45A, ACTL6A/BAF53A and actin. Component of neuron-specific chromatin remodeling complex (nBAF complex) composed of at least, ARID1A/BAF250A or ARID1B/BAF250B, SMARCD1/BAF60A, SMARCD3/BAF60C, SMARCA2/BRM/BAF190B, SMARCA4/BRG1/BAF190A, SMARCB1/BAF47, SMARCC1/BAF155, SMARCE1/BAF57, SMARCC2/BAF170, DPF1/BAF45B, DPF3/BAF45C, ACTL6B/BAF53B and actin. Component of the SWI/SNF-B (PBAF) chromatin remodeling complex, at least composed of SMARCA4/BRG1, SMARCB1/BAF47/SNF5, ACTL6A/BAF53A or ACTL6B/BAF53B, SMARCE1/BAF57, SMARCD1/BAF60A, SMARCD2/BAF60B, perhaps SMARCD3/BAF60C, SMARCC1/BAF155, SMARCC2/BAF170, PBRM1/BAF180, ARID2/BAF200 and actin (ACTB). Component of SWI/SNF (GBAF) subcomplex, which includes at least BICRA or BICRAL (mutually exclusive), BRD9, SS18, SMARCA2/BRM, SMARCA4/BRG1/BAF190A, ACTL6A/BAF53, SMARCC1/BAF155, and SMARCD1/BAF60A. Specifically interacts with the VDR heterodimer complex. Interacts with ESR1, NR3C1, NR1H4, PGR, SMARCA4, SMARCC1 and SMARCC2. Interacts with DPF2. Interacts with FOS, FOSB, FOSL1 and FOSL2.

Its subcellular location is the nucleus. Its function is as follows. Involved in transcriptional activation and repression of select genes by chromatin remodeling (alteration of DNA-nucleosome topology). Component of SWI/SNF chromatin remodeling complexes that carry out key enzymatic activities, changing chromatin structure by altering DNA-histone contacts within a nucleosome in an ATP-dependent manner. Belongs to the neural progenitors-specific chromatin remodeling complex (npBAF complex) and the neuron-specific chromatin remodeling complex (nBAF complex). During neural development a switch from a stem/progenitor to a postmitotic chromatin remodeling mechanism occurs as neurons exit the cell cycle and become committed to their adult state. The transition from proliferating neural stem/progenitor cells to postmitotic neurons requires a switch in subunit composition of the npBAF and nBAF complexes. As neural progenitors exit mitosis and differentiate into neurons, npBAF complexes which contain ACTL6A/BAF53A and PHF10/BAF45A, are exchanged for homologous alternative ACTL6B/BAF53B and DPF1/BAF45B or DPF3/BAF45C subunits in neuron-specific complexes (nBAF). The npBAF complex is essential for the self-renewal/proliferative capacity of the multipotent neural stem cells. The nBAF complex along with CREST plays a role regulating the activity of genes essential for dendrite growth. Has a strong influence on vitamin D-mediated transcriptional activity from an enhancer vitamin D receptor element (VDRE). May be a link between mammalian SWI-SNF-like chromatin remodeling complexes and the vitamin D receptor (VDR) heterodimer. Mediates critical interactions between nuclear receptors and the BRG1/SMARCA4 chromatin-remodeling complex for transactivation. Interacts with AKIRIN2. The polypeptide is SWI/SNF-related matrix-associated actin-dependent regulator of chromatin subfamily D member 1 (SMARCD1) (Bos taurus (Bovine)).